A 445-amino-acid chain; its full sequence is Tubulin beta chain (445 aa).

The short motif at 1 to 4 (MREI) is the MREI motif element. Gln-11 lines the GTP pocket. Residue Ser-40 is modified to Phosphoserine. Lys-58 is subject to N6-acetyllysine; alternate. Lys-58 carries the N6-succinyllysine; alternate modification. A Glycyl lysine isopeptide (Lys-Gly) (interchain with G-Cter in ubiquitin); alternate cross-link involves residue Lys-58. GTP-binding residues include Glu-69, Ser-138, Gly-142, Thr-143, and Gly-144. Glu-69 serves as a coordination point for Mg(2+). Ser-172 carries the post-translational modification Phosphoserine; by CDK1. Residues Asn-204 and Asn-226 each contribute to the GTP site. A phosphothreonine mark is found at Thr-285 and Thr-290. Arg-318 is modified (omega-N-methylarginine). Residue Lys-324 forms a Glycyl lysine isopeptide (Lys-Gly) (interchain with G-Cter in ubiquitin) linkage. Residues 424–445 (QYQDATADEQGEFEEEGEEDEA) are disordered. Residues 429–445 (TADEQGEFEEEGEEDEA) are compositionally biased toward acidic residues. Glu-438 is modified (5-glutamyl polyglutamate).

Belongs to the tubulin family. Dimer of alpha and beta chains. A typical microtubule is a hollow water-filled tube with an outer diameter of 25 nm and an inner diameter of 15 nM. Alpha-beta heterodimers associate head-to-tail to form protofilaments running lengthwise along the microtubule wall with the beta-tubulin subunit facing the microtubule plus end conferring a structural polarity. Microtubules usually have 13 protofilaments but different protofilament numbers can be found in some organisms and specialized cells. Interacts with NCKAP5L. It depends on Mg(2+) as a cofactor. Post-translationally, some glutamate residues at the C-terminus are polyglycylated, resulting in polyglycine chains on the gamma-carboxyl group. Glycylation is mainly limited to tubulin incorporated into axonemes (cilia and flagella) whereas glutamylation is prevalent in neuronal cells, centrioles, axonemes, and the mitotic spindle. Both modifications can coexist on the same protein on adjacent residues, and lowering polyglycylation levels increases polyglutamylation, and reciprocally. Cilia and flagella glycylation is required for their stability and maintenance. Flagella glycylation controls sperm motility. Some glutamate residues at the C-terminus are polyglutamylated, resulting in polyglutamate chains on the gamma-carboxyl group. Polyglutamylation plays a key role in microtubule severing by spastin (SPAST). SPAST preferentially recognizes and acts on microtubules decorated with short polyglutamate tails: severing activity by SPAST increases as the number of glutamates per tubulin rises from one to eight, but decreases beyond this glutamylation threshold. In terms of processing, phosphorylated on Ser-172 by CDK1 during the cell cycle, from metaphase to telophase, but not in interphase. This phosphorylation inhibits tubulin incorporation into microtubules.

It localises to the cytoplasm. Its subcellular location is the cytoskeleton. Its function is as follows. Tubulin is the major constituent of microtubules, a cylinder consisting of laterally associated linear protofilaments composed of alpha- and beta-tubulin heterodimers. Microtubules grow by the addition of GTP-tubulin dimers to the microtubule end, where a stabilizing cap forms. Below the cap, tubulin dimers are in GDP-bound state, owing to GTPase activity of alpha-tubulin. This chain is Tubulin beta chain, found in Sus scrofa (Pig).